The primary structure comprises 809 residues: uncharacterized protein (809 aa).

Residues 19–206 (HDLRLVLVAS…FTGMSAITIV (188 aa)) form the MHYT domain. Helical transmembrane passes span 23–43 (LVLV…RLYS), 57–77 (LLLT…IAMV), 92–112 (TLLS…VASA), 122–142 (GGVL…SAFV), 152–172 (ATVG…LLLA), 186–206 (GMLC…ITIV), and 224–244 (TLAV…AVAI). Residues 254–317 (ERIRRLANAA…ADPSREDVRR (64 aa)) form the PAS domain. The 135-residue stretch at 402 to 536 (ESLAVICIDL…GRGVYRFFKR (135 aa)) folds into the GGDEF domain. Residues 545–795 (RRNLARDLRQ…ALTMWTTAGD (251 aa)) form the EAL domain.

Its subcellular location is the cell membrane. This is an uncharacterized protein from Caulobacter vibrioides (strain ATCC 19089 / CIP 103742 / CB 15) (Caulobacter crescentus).